Reading from the N-terminus, the 108-residue chain is Small cysteine and glycine repeat-containing protein 8 (108 aa).

The segment at 4–84 (CGCGGCGGGC…RRTCSSCGCG (81 aa)) is 12 X 2 AA repeats of CG.

Belongs to the KRTAP type 28 family.

In the hair cortex, hair keratin intermediate filaments are embedded in an interfilamentous matrix, consisting of hair keratin-associated proteins (KRTAP), which are essential for the formation of a rigid and resistant hair shaft through their extensive disulfide bond cross-linking with abundant cysteine residues of hair keratins. The matrix proteins include the high-sulfur and high-glycine-tyrosine keratins. The sequence is that of Small cysteine and glycine repeat-containing protein 8 from Homo sapiens (Human).